A 498-amino-acid polypeptide reads, in one-letter code: Aspartyl/glutamyl-tRNA(Asn/Gln) amidotransferase subunit B (498 aa).

The protein belongs to the GatB/GatE family. GatB subfamily. As to quaternary structure, heterotrimer of A, B and C subunits.

It carries out the reaction L-glutamyl-tRNA(Gln) + L-glutamine + ATP + H2O = L-glutaminyl-tRNA(Gln) + L-glutamate + ADP + phosphate + H(+). The catalysed reaction is L-aspartyl-tRNA(Asn) + L-glutamine + ATP + H2O = L-asparaginyl-tRNA(Asn) + L-glutamate + ADP + phosphate + 2 H(+). In terms of biological role, allows the formation of correctly charged Asn-tRNA(Asn) or Gln-tRNA(Gln) through the transamidation of misacylated Asp-tRNA(Asn) or Glu-tRNA(Gln) in organisms which lack either or both of asparaginyl-tRNA or glutaminyl-tRNA synthetases. The reaction takes place in the presence of glutamine and ATP through an activated phospho-Asp-tRNA(Asn) or phospho-Glu-tRNA(Gln). The sequence is that of Aspartyl/glutamyl-tRNA(Asn/Gln) amidotransferase subunit B from Caulobacter vibrioides (strain ATCC 19089 / CIP 103742 / CB 15) (Caulobacter crescentus).